A 445-amino-acid chain; its full sequence is Methylenetetrahydrofolate--tRNA-(uracil-5-)-methyltransferase TrmFO (445 aa).

An FAD-binding site is contributed by 10–15 (GGGLAG).

It belongs to the MnmG family. TrmFO subfamily. It depends on FAD as a cofactor.

The protein resides in the cytoplasm. The enzyme catalyses uridine(54) in tRNA + (6R)-5,10-methylene-5,6,7,8-tetrahydrofolate + NADH + H(+) = 5-methyluridine(54) in tRNA + (6S)-5,6,7,8-tetrahydrofolate + NAD(+). It catalyses the reaction uridine(54) in tRNA + (6R)-5,10-methylene-5,6,7,8-tetrahydrofolate + NADPH + H(+) = 5-methyluridine(54) in tRNA + (6S)-5,6,7,8-tetrahydrofolate + NADP(+). Catalyzes the folate-dependent formation of 5-methyl-uridine at position 54 (M-5-U54) in all tRNAs. The sequence is that of Methylenetetrahydrofolate--tRNA-(uracil-5-)-methyltransferase TrmFO from Microcystis aeruginosa (strain NIES-843 / IAM M-2473).